A 269-amino-acid chain; its full sequence is Lck-interacting transmembrane adapter 1 (269 aa).

Topologically, residues 1–7 (MRPPVPS) are extracellular. A helical; Signal-anchor for type III membrane protein transmembrane segment spans residues 8 to 28 (APLALWVLGCFSLLLWLWALC). Residues cysteine 28 and cysteine 31 are each lipidated (S-palmitoyl cysteine). The Cytoplasmic portion of the chain corresponds to 29 to 269 (TACHRKRAQR…VYESIKEMGL (241 aa)). The disordered stretch occupies residues 102–133 (STRSQVPNSAFPPRQLPRAPPAAPATAPSTSS). The span at 115–124 (RQLPRAPPAA) shows a compositional bias: pro residues. A phosphotyrosine mark is found at tyrosine 137, tyrosine 175, and tyrosine 207. The interaction with GRB2 stretch occupies residues 137–140 (YSNV). 2 interaction with CSK regions span residues 175 to 178 (YACI) and 207 to 210 (YSRV). Phosphotyrosine; by LYN or LCK is present on residues tyrosine 242 and tyrosine 261. Residues 242 to 245 (YEAI) are interaction with LCK and PIK3R1. The interaction with LCK, PLCG2 and PIK3R1 stretch occupies residues 261–264 (YESI). Serine 263 bears the Phosphoserine mark.

In terms of assembly, when phosphorylated in response to TCR stimulation and/or CD4 costimulation, interacts with LCK, CSK, FYN, PTPN11/SHP2, GRB2, PIK3R1 and GRAP2. When phosphorylated in response to BCR activation, interacts with LYN, PIK3R1, PLCG2 and GRB2. Palmitoylation of Cys-28 and Cys-31 is required for raft targeting. In terms of processing, phosphorylated on tyrosines upon TCR activation and/or CD4 coreceptor stimulation, or upon BCR stimulation; which leads to the recruitment of SH2-containing proteins. Expressed in spleen and lung. Present in primary B-cells and peripheral T-cells (at protein level).

It is found in the cell membrane. In terms of biological role, involved in BCR (B-cell antigen receptor)-mediated signaling in B-cells and TCR (T-cell antigen receptor)-mediated T-cell signaling in T-cells. In absence of TCR signaling, may be involved in CD4-mediated inhibition of T-cell activation. Couples activation of these receptors and their associated kinases with distal intracellular events such as calcium mobilization or MAPK activation through the recruitment of PLCG2, GRB2, GRAP2, and other signaling molecules. The chain is Lck-interacting transmembrane adapter 1 (Lime1) from Mus musculus (Mouse).